Here is a 340-residue protein sequence, read N- to C-terminus: Uroporphyrinogen decarboxylase (340 aa).

Residues 21 to 25, Phe40, Asp71, Tyr147, Ser202, and His316 each bind substrate; that span reads RQAGR.

Belongs to the uroporphyrinogen decarboxylase family. In terms of assembly, homodimer.

The protein localises to the cytoplasm. It catalyses the reaction uroporphyrinogen III + 4 H(+) = coproporphyrinogen III + 4 CO2. It participates in porphyrin-containing compound metabolism; protoporphyrin-IX biosynthesis; coproporphyrinogen-III from 5-aminolevulinate: step 4/4. Catalyzes the decarboxylation of four acetate groups of uroporphyrinogen-III to yield coproporphyrinogen-III. The chain is Uroporphyrinogen decarboxylase from Helicobacter hepaticus (strain ATCC 51449 / 3B1).